The primary structure comprises 211 residues: Redox-sensing transcriptional repressor Rex (211 aa).

Positions 17-56 form a DNA-binding region, H-T-H motif; that stretch reads LYYRFVSILKGKGIDRVNSKTISEALQIDSATIRRDFSYF. 91-96 contacts NAD(+); sequence GIGNLG.

The protein belongs to the transcriptional regulatory Rex family. Homodimer.

It localises to the cytoplasm. Its function is as follows. Modulates transcription in response to changes in cellular NADH/NAD(+) redox state. The protein is Redox-sensing transcriptional repressor Rex of Staphylococcus epidermidis (strain ATCC 35984 / DSM 28319 / BCRC 17069 / CCUG 31568 / BM 3577 / RP62A).